The sequence spans 137 residues: SMR2 protein (137 aa).

Positions M1 to N18 are cleaved as a signal peptide. Residues S14 to Q113 form a disordered region. The segment covering Q75–Q85 has biased composition (low complexity). Residues P99–L110 show a composition bias toward basic and acidic residues.

The protein localises to the secreted. Its function is as follows. Unknown, male-specific function. The chain is SMR2 protein (Smr2) from Rattus norvegicus (Rat).